The sequence spans 154 residues: Superoxide dismutase [Cu-Zn] (154 aa).

3 residues coordinate Cu cation: histidine 47, histidine 49, and histidine 64. The cysteines at positions 58 and 147 are disulfide-linked. The Zn(2+) site is built by histidine 64, histidine 72, histidine 81, and aspartate 84. Histidine 121 lines the Cu cation pocket. Over residues 126 to 137 the composition is skewed to basic and acidic residues; the sequence is DLGRGGNEESKK. Residues 126–147 form a disordered region; the sequence is DLGRGGNEESKKTGNAGPRPAC.

This sequence belongs to the Cu-Zn superoxide dismutase family. As to quaternary structure, homodimer. It depends on Cu cation as a cofactor. Zn(2+) serves as cofactor.

Its subcellular location is the cytoplasm. The catalysed reaction is 2 superoxide + 2 H(+) = H2O2 + O2. Destroys radicals which are normally produced within the cells and which are toxic to biological systems. Plays an important role in the phase transition, and may be important in vivo, as it would facilitate the intracellular survival of the fungus by providing a non-toxic environment in the macrophage phagolysosomes. In Talaromyces marneffei (Penicillium marneffei), this protein is Superoxide dismutase [Cu-Zn].